Reading from the N-terminus, the 523-residue chain is uncharacterized protein (523 aa).

The N-terminal 63 residues, 1-63 (MACVSTCLIL…NRHGIAVVKA (63 aa)), are a transit peptide targeting the chloroplast. 3 helical membrane-spanning segments follow: residues 180–200 (VSFG…IIAL), 386–406 (ALVI…NTLL), and 423–443 (IYPL…IRWF).

The protein localises to the plastid. Its subcellular location is the chloroplast membrane. This is an uncharacterized protein from Arabidopsis thaliana (Mouse-ear cress).